We begin with the raw amino-acid sequence, 160 residues long: Urease accessory protein UreE (160 aa).

It belongs to the UreE family.

The protein localises to the cytoplasm. Involved in urease metallocenter assembly. Binds nickel. Probably functions as a nickel donor during metallocenter assembly. This chain is Urease accessory protein UreE, found in Acinetobacter baumannii (strain ACICU).